The primary structure comprises 338 residues: 3-dehydroquinate synthase (338 aa).

NAD(+) is bound by residues D58–K63, G92–D96, T116–T117, K129, and K138. Residues E169, H229, and H245 each coordinate Zn(2+).

This sequence belongs to the sugar phosphate cyclases superfamily. Dehydroquinate synthase family. NAD(+) serves as cofactor. The cofactor is Co(2+). It depends on Zn(2+) as a cofactor.

The protein resides in the cytoplasm. It carries out the reaction 7-phospho-2-dehydro-3-deoxy-D-arabino-heptonate = 3-dehydroquinate + phosphate. Its pathway is metabolic intermediate biosynthesis; chorismate biosynthesis; chorismate from D-erythrose 4-phosphate and phosphoenolpyruvate: step 2/7. Catalyzes the conversion of 3-deoxy-D-arabino-heptulosonate 7-phosphate (DAHP) to dehydroquinate (DHQ). The chain is 3-dehydroquinate synthase from Picrophilus torridus (strain ATCC 700027 / DSM 9790 / JCM 10055 / NBRC 100828 / KAW 2/3).